A 245-amino-acid chain; its full sequence is DNA polymerase sliding clamp (245 aa).

The protein belongs to the PCNA family. As to quaternary structure, homotrimer. The subunits circularize to form a toroid; DNA passes through its center. Replication factor C (RFC) is required to load the toroid on the DNA.

Functionally, sliding clamp subunit that acts as a moving platform for DNA processing. Responsible for tethering the catalytic subunit of DNA polymerase and other proteins to DNA during high-speed replication. The sequence is that of DNA polymerase sliding clamp from Methanosarcina acetivorans (strain ATCC 35395 / DSM 2834 / JCM 12185 / C2A).